Reading from the N-terminus, the 135-residue chain is uncharacterized protein (135 aa).

The 70-residue stretch at 2-71 (TYTTAKAAEK…LKDIKRFAEC (70 aa)) folds into the HTH merR-type domain. Residues 5–24 (TAKAAEKIGISAYTLRFYDK) constitute a DNA-binding region (H-T-H motif).

This is an uncharacterized protein from Haemophilus influenzae (strain ATCC 51907 / DSM 11121 / KW20 / Rd).